The sequence spans 258 residues: Indole-3-glycerol phosphate synthase (258 aa).

This sequence belongs to the TrpC family.

The catalysed reaction is 1-(2-carboxyphenylamino)-1-deoxy-D-ribulose 5-phosphate + H(+) = (1S,2R)-1-C-(indol-3-yl)glycerol 3-phosphate + CO2 + H2O. It participates in amino-acid biosynthesis; L-tryptophan biosynthesis; L-tryptophan from chorismate: step 4/5. This is Indole-3-glycerol phosphate synthase from Chlorobium phaeobacteroides (strain DSM 266 / SMG 266 / 2430).